Reading from the N-terminus, the 151-residue chain is uncharacterized protein (151 aa).

This is an uncharacterized protein from Saccharomyces cerevisiae (strain ATCC 204508 / S288c) (Baker's yeast).